A 206-amino-acid chain; its full sequence is Small ribosomal subunit protein uS4 (206 aa).

An S4 RNA-binding domain is found at 96–156; it reads CRLDNVVYRM…EKSLNQLRIV (61 aa).

The protein belongs to the universal ribosomal protein uS4 family. Part of the 30S ribosomal subunit. Contacts protein S5. The interaction surface between S4 and S5 is involved in control of translational fidelity.

In terms of biological role, one of the primary rRNA binding proteins, it binds directly to 16S rRNA where it nucleates assembly of the body of the 30S subunit. With S5 and S12 plays an important role in translational accuracy. The protein is Small ribosomal subunit protein uS4 of Pseudomonas entomophila (strain L48).